A 468-amino-acid chain; its full sequence is H(+)/Cl(-) exchange transporter ClcA (468 aa).

Over 1-30 (MSTRETFKISLLAKMPKDVINQFLSKDKTP) the chain is Cytoplasmic. Residues 31-67 (FSVLFLSLLVGILAGLVGTYFEQAVHLVSETRTDWLK) traverse the membrane as a helical segment. Residues 68 to 74 (SEIGSFL) are Periplasmic-facing. Residues 75 to 98 (PLWLAAFLISAFLAFIGYFLVHRF) form a helical membrane-spanning segment. The Selectivity filter part_1 motif lies at 104–108 (GSGIP). Serine 105 provides a ligand contact to chloride. Positions 107–114 (IPEIEGAM) form an intramembrane region, helical. Topologically, residues 115 to 121 (DGMRPVR) are cytoplasmic. The next 2 helical transmembrane spans lie at 122–139 (WWRV…ALGS) and 146–164 (EGPT…SDIF). The Selectivity filter part_2 motif lies at 144–148 (GREGP). At 165–174 (RVKNEDTRHS) the chain is on the cytoplasmic side. Intramembrane regions (helical) lie at residues 175-187 (LLAA…LAAA) and 191-199 (PLAGIMFVI). The Cytoplasmic segment spans residues 200–212 (EEMRPQFRYTLIS). A helical membrane pass occupies residues 213 to 230 (VRAVIISAVAANIVFRVI). Residues 231–250 (NGQDAVITMPQYDAPELSTL) are Periplasmic-facing. A helical membrane pass occupies residues 251–279 (GLFLLLGALFGVFGVLFNYLITLAQDLFV). Topologically, residues 280 to 285 (KFHRND) are cytoplasmic. Residues 286 to 307 (RKRYLLTGSMIGGCFGLLLLYV) traverse the membrane as a helical segment. The Periplasmic portion of the chain corresponds to 308-327 (PELTGGGISLIPTITNGGYG). Transmembrane regions (helical) follow at residues 328–347 (AGIL…LCFG) and 353–374 (GIFA…LIAK). Residues 353–357 (GIFAP) carry the Selectivity filter part_3 motif. Chloride is bound by residues isoleucine 354 and phenylalanine 355. Over 375 to 384 (MWFPELNIEP) the chain is Periplasmic. Positions 385 to 399 (GMFAIAGMGALFAAT) form an intramembrane region, helical. The segment at residues 400–402 (VRA) is an intramembrane region (note=Loop between two helices). The helical intramembrane region spans 403 to 414 (PITGILLVIEMT). An intramembrane region (note=Loop between two helices) is located at residues 415–419 (NNYHL). A helical membrane pass occupies residues 420–436 (ILPLIITSLGAVIFAQL). Residues 437 to 468 (LGGQPIYSQLLHRTLKNQKLQQQDLPPQSPNS) are Cytoplasmic-facing. Residue tyrosine 443 coordinates chloride.

It belongs to the chloride channel (TC 2.A.49) family. ClcA subfamily. In terms of assembly, homodimer.

The protein localises to the cell inner membrane. The enzyme catalyses 2 chloride(in) + H(+)(out) = 2 chloride(out) + H(+)(in). Its function is as follows. Proton-coupled chloride transporter. Functions as antiport system and exchanges two chloride ions for 1 proton. Probably acts as an electrical shunt for an outwardly-directed proton pump that is linked to amino acid decarboxylation, as part of the extreme acid resistance (XAR) response. The polypeptide is H(+)/Cl(-) exchange transporter ClcA (Vibrio cholerae serotype O1 (strain ATCC 39315 / El Tor Inaba N16961)).